Reading from the N-terminus, the 197-residue chain is GTP cyclohydrolase-2 (197 aa).

50-54 (RIHSE) lines the GTP pocket. Positions 55, 66, and 68 each coordinate Zn(2+). Residues Gln71, 93–95 (EGR), and Thr115 each bind GTP. Asp127 acts as the Proton acceptor in catalysis. Arg129 serves as the catalytic Nucleophile. GTP-binding residues include Thr150 and Lys155.

It belongs to the GTP cyclohydrolase II family. It depends on Zn(2+) as a cofactor.

It carries out the reaction GTP + 4 H2O = 2,5-diamino-6-hydroxy-4-(5-phosphoribosylamino)-pyrimidine + formate + 2 phosphate + 3 H(+). It participates in cofactor biosynthesis; riboflavin biosynthesis; 5-amino-6-(D-ribitylamino)uracil from GTP: step 1/4. In terms of biological role, catalyzes the conversion of GTP to 2,5-diamino-6-ribosylamino-4(3H)-pyrimidinone 5'-phosphate (DARP), formate and pyrophosphate. The sequence is that of GTP cyclohydrolase-2 from Tolumonas auensis (strain DSM 9187 / NBRC 110442 / TA 4).